Reading from the N-terminus, the 179-residue chain is Bifunctional protein PyrR (179 aa).

Positions 100 to 112 (VILVDDVLFTGRT) match the PRPP-binding motif.

Belongs to the purine/pyrimidine phosphoribosyltransferase family. PyrR subfamily.

It carries out the reaction UMP + diphosphate = 5-phospho-alpha-D-ribose 1-diphosphate + uracil. Its function is as follows. Regulates the transcription of the pyrimidine nucleotide (pyr) operon in response to exogenous pyrimidines. In terms of biological role, also displays a weak uracil phosphoribosyltransferase activity which is not physiologically significant. This chain is Bifunctional protein PyrR, found in Haemophilus influenzae (strain 86-028NP).